The following is a 202-amino-acid chain: ATP-dependent Clp protease proteolytic subunit (202 aa).

The Nucleophile role is filled by S101. H126 is an active-site residue.

Belongs to the peptidase S14 family. As to quaternary structure, component of the chloroplastic Clp protease core complex.

It is found in the plastid. The protein resides in the chloroplast stroma. The enzyme catalyses Hydrolysis of proteins to small peptides in the presence of ATP and magnesium. alpha-casein is the usual test substrate. In the absence of ATP, only oligopeptides shorter than five residues are hydrolyzed (such as succinyl-Leu-Tyr-|-NHMec, and Leu-Tyr-Leu-|-Tyr-Trp, in which cleavage of the -Tyr-|-Leu- and -Tyr-|-Trp bonds also occurs).. Cleaves peptides in various proteins in a process that requires ATP hydrolysis. Has a chymotrypsin-like activity. Plays a major role in the degradation of misfolded proteins. In Acorus calamus (Sweet flag), this protein is ATP-dependent Clp protease proteolytic subunit.